The chain runs to 512 residues: Podocan-like protein 1 (512 aa).

Residues 1 to 26 form the signal peptide; sequence MAESGLAMWPSLLLLLLLPGPPPVAG. The 38-residue stretch at 37 to 74 folds into the LRRNT domain; it reads ESLQPLPRACPLRCSCPRVDTVDCDGLDLRVFPDNITR. An N-linked (GlcNAc...) asparagine glycan is attached at asparagine 71. 17 LRR repeats span residues 75–96, 99–119, 125–146, 147–167, 170–193, 196–216, 217–238, 241–261, 267–288, 289–309, 312–332, 338–359, 360–380, 383–396, 409–430, 431–451, and 454–474; these read AAQH…ELSR, GLRT…PDEA, QLQH…LPRS, LRVA…TFGE, ALRS…AFRG, AIAT…SLPP, SLER…ALSR, QLRE…DATT, SLEY…LPRT, LAIL…RLHG, GLRY…PAGA, GLHT…LPRR, LRAL…DLVA, GLTE…RLAS, ALRS…LPTG, LRTL…PLAG, and QLRE…GPGT.

Belongs to the small leucine-rich proteoglycan (SLRP) family. SLRP class V subfamily. In terms of processing, N-glycosylated.

It is found in the secreted. The protein resides in the extracellular space. Its subcellular location is the extracellular matrix. The polypeptide is Podocan-like protein 1 (PODNL1) (Homo sapiens (Human)).